Reading from the N-terminus, the 275-residue chain is 4-hydroxy-tetrahydrodipicolinate reductase (275 aa).

NAD(+)-binding positions include Gly13–Met18 and Gly108–Thr110. His164 (proton donor/acceptor) is an active-site residue. His165 provides a ligand contact to (S)-2,3,4,5-tetrahydrodipicolinate. Lys168 functions as the Proton donor in the catalytic mechanism. Gly174–Thr175 is a (S)-2,3,4,5-tetrahydrodipicolinate binding site.

The protein belongs to the DapB family.

The protein resides in the cytoplasm. The catalysed reaction is (S)-2,3,4,5-tetrahydrodipicolinate + NAD(+) + H2O = (2S,4S)-4-hydroxy-2,3,4,5-tetrahydrodipicolinate + NADH + H(+). It carries out the reaction (S)-2,3,4,5-tetrahydrodipicolinate + NADP(+) + H2O = (2S,4S)-4-hydroxy-2,3,4,5-tetrahydrodipicolinate + NADPH + H(+). It participates in amino-acid biosynthesis; L-lysine biosynthesis via DAP pathway; (S)-tetrahydrodipicolinate from L-aspartate: step 4/4. In terms of biological role, catalyzes the conversion of 4-hydroxy-tetrahydrodipicolinate (HTPA) to tetrahydrodipicolinate. This Cyanothece sp. (strain PCC 7425 / ATCC 29141) protein is 4-hydroxy-tetrahydrodipicolinate reductase.